A 525-amino-acid chain; its full sequence is Peptide chain release factor 3 (525 aa).

In terms of domain architecture, tr-type G spans 11–279 (ERRRTFAIIS…AFVDMAPAPE (269 aa)). Residues 20–27 (SHPDAGKT), 88–92 (DTPGH), and 142–145 (NKLD) contribute to the GTP site.

It belongs to the TRAFAC class translation factor GTPase superfamily. Classic translation factor GTPase family. PrfC subfamily.

The protein localises to the cytoplasm. In terms of biological role, increases the formation of ribosomal termination complexes and stimulates activities of RF-1 and RF-2. It binds guanine nucleotides and has strong preference for UGA stop codons. It may interact directly with the ribosome. The stimulation of RF-1 and RF-2 is significantly reduced by GTP and GDP, but not by GMP. The protein is Peptide chain release factor 3 of Latilactobacillus sakei subsp. sakei (strain 23K) (Lactobacillus sakei subsp. sakei).